We begin with the raw amino-acid sequence, 159 residues long: Transcription elongation factor GreA (159 aa).

A coiled-coil region spans residues 45–67 (NAEYHEARKEQSFVEGKIRELQL).

This sequence belongs to the GreA/GreB family.

Necessary for efficient RNA polymerase transcription elongation past template-encoded arresting sites. The arresting sites in DNA have the property of trapping a certain fraction of elongating RNA polymerases that pass through, resulting in locked ternary complexes. Cleavage of the nascent transcript by cleavage factors such as GreA or GreB allows the resumption of elongation from the new 3'terminus. GreA releases sequences of 2 to 3 nucleotides. This chain is Transcription elongation factor GreA, found in Neorickettsia sennetsu (strain ATCC VR-367 / Miyayama) (Ehrlichia sennetsu).